The following is a 951-amino-acid chain: Thyroid hormone receptor-associated protein 3 (951 aa).

Residues 1-13 (MSKTNKSKSGSRS) show a composition bias toward low complexity. Residues 1-94 (MSKTNKSKSG…YFRGRNRGFY (94 aa)) form a disordered region. Ser-2 carries the N-acetylserine modification. The required for mRNA splicing activation stretch occupies residues 2–190 (SKTNKSKSGS…KSSSKDSRPS (189 aa)). Over residues 14-51 (SRSRSASRSRSRSFSKSRSRSRSVSRSRKRRLSSRSRS) the composition is skewed to basic residues. Dimethylated arginine is present on Arg-17. Residues 58-75 (HNRERNHPRVYQNRDFRG) are compositionally biased toward basic and acidic residues. Asymmetric dimethylarginine is present on Arg-66. The span at 82 to 94 (RPYYFRGRNRGFY) shows a compositional bias: low complexity. Asymmetric dimethylarginine is present on residues Arg-101 and Arg-108. The disordered stretch occupies residues 117–558 (AYSPRRGRSR…GDFSSGKSSF (442 aa)). Positions 121–143 (RRGRSRSRSPKRRSPSPRSRSHS) are enriched in basic residues. The segment covering 144–155 (RNSDKSSSDRSR) has biased composition (basic and acidic residues). Low complexity predominate over residues 157-166 (SSSSRSSSNH). A compositionally biased stretch (basic and acidic residues) spans 167 to 188 (SRVESSKRKSTKEKKSSSKDSR). A Glycyl lysine isopeptide (Lys-Gly) (interchain with G-Cter in SUMO1); alternate cross-link involves residue Lys-202. Lys-202 participates in a covalent cross-link: Glycyl lysine isopeptide (Lys-Gly) (interchain with G-Cter in SUMO2); alternate. Residues 204–220 (QTFSGGTSQDIKGSESS) show a composition bias toward polar residues. A Glycyl lysine isopeptide (Lys-Gly) (interchain with G-Cter in SUMO2) cross-link involves residue Lys-215. Phosphoserine is present on Ser-220. Residue Lys-221 forms a Glycyl lysine isopeptide (Lys-Gly) (interchain with G-Cter in SUMO2); alternate linkage. At Lys-221 the chain carries N6-acetyllysine; alternate. 5 positions are modified to phosphoserine: Ser-233, Ser-238, Ser-240, Ser-243, and Ser-248. Residue Lys-252 forms a Glycyl lysine isopeptide (Lys-Gly) (interchain with G-Cter in SUMO2); alternate linkage. Position 252 is an N6-methyllysine; alternate (Lys-252). Ser-253 and Ser-257 each carry phosphoserine. Pro residues predominate over residues 266-276 (RPSPVPKPSPP). Over residues 305–322 (GSGSLSPSKKSPVGKSPP) the composition is skewed to low complexity. Ser-315 and Ser-320 each carry phosphoserine. Position 324 is a phosphothreonine (Thr-324). Ser-326 is subject to Phosphoserine. Tyr-328 is modified (phosphotyrosine). A Glycyl lysine isopeptide (Lys-Gly) (interchain with G-Cter in SUMO2) cross-link involves residue Lys-333. Over residues 337 to 346 (AASGGAAYSK) the composition is skewed to low complexity. Ser-339 carries the post-translational modification Phosphoserine. Lys-346 is covalently cross-linked (Glycyl lysine isopeptide (Lys-Gly) (interchain with G-Cter in SUMO2); alternate). At Lys-346 the chain carries N6-acetyllysine; alternate. Residues 347 to 387 (RYLEEQKTENGKDKEQKQTNADKEKLKEKGGFSDADVKMKS) are compositionally biased toward basic and acidic residues. Glycyl lysine isopeptide (Lys-Gly) (interchain with G-Cter in SUMO2) cross-links involve residues Lys-353 and Lys-375. Positions 359–951 (DKEQKQTNAD…EKDSLQPSAE (593 aa)) are required for mRNA decay activity. Position 379 is a phosphoserine (Ser-379). Lys-384 is covalently cross-linked (Glycyl lysine isopeptide (Lys-Gly) (interchain with G-Cter in SUMO1); alternate). Lys-384 is covalently cross-linked (Glycyl lysine isopeptide (Lys-Gly) (interchain with G-Cter in SUMO2); alternate). Glycyl lysine isopeptide (Lys-Gly) (interchain with G-Cter in SUMO2) cross-links involve residues Lys-386 and Lys-393. Thr-394 bears the Phosphothreonine mark. Residue Lys-398 forms a Glycyl lysine isopeptide (Lys-Gly) (interchain with G-Cter in SUMO2) linkage. Residues Ser-403 and Ser-405 each carry the phosphoserine modification. A compositionally biased stretch (basic and acidic residues) spans 411–449 (LRDDFEKKMADFHKEELDEHDKDKSKGRKEPEFDDEPKF). Glycyl lysine isopeptide (Lys-Gly) (interchain with G-Cter in SUMO2) cross-links involve residues Lys-418 and Lys-424. Residue Lys-448 forms a Glycyl lysine isopeptide (Lys-Gly) (interchain with G-Cter in SUMO1); alternate linkage. Residues Lys-448 and Lys-452 each participate in a glycyl lysine isopeptide (Lys-Gly) (interchain with G-Cter in SUMO2); alternate cross-link. Lys-452 carries the post-translational modification N6-acetyllysine; alternate. Residues Lys-459 and Lys-465 each participate in a glycyl lysine isopeptide (Lys-Gly) (interchain with G-Cter in SUMO2) cross-link. Basic and acidic residues-rich tracts occupy residues 460–483 (NQEEEKSGKWESLHTGKEKQRKAE) and 490–518 (FTERSRKEERGGSKRSESGHRGFVPEKNF). Residue Ser-466 is modified to Phosphoserine. Residues Lys-468 and Lys-476 each participate in a glycyl lysine isopeptide (Lys-Gly) (interchain with G-Cter in SUMO2); alternate cross-link. Lys-468 and Lys-476 each carry N6-acetyllysine; alternate. Lys-481 participates in a covalent cross-link: Glycyl lysine isopeptide (Lys-Gly) (interchain with G-Cter in SUMO2). An N6-acetyllysine modification is found at Lys-516. Lys-524 is covalently cross-linked (Glycyl lysine isopeptide (Lys-Gly) (interchain with G-Cter in SUMO2); alternate). An N6-acetyllysine; alternate modification is found at Lys-524. The residue at position 532 (Ser-532) is a Phosphoserine. A compositionally biased stretch (basic and acidic residues) spans 537 to 547 (KTSESRDKLGS). Lys-548 is covalently cross-linked (Glycyl lysine isopeptide (Lys-Gly) (interchain with G-Cter in SUMO2)). Positions 548 to 558 (KGDFSSGKSSF) are enriched in low complexity. An ATP-binding site is contributed by 549–556 (GDFSSGKS). A Glycyl lysine isopeptide (Lys-Gly) (interchain with G-Cter in SUMO2); alternate cross-link involves residue Lys-555. Position 555 is an N6-acetyllysine; alternate (Lys-555). Phosphoserine occurs at positions 557, 559, and 572. Lys-599 participates in a covalent cross-link: Glycyl lysine isopeptide (Lys-Gly) (interchain with G-Cter in SUMO2). Phosphoserine is present on residues Ser-616, Ser-619, Ser-669, Ser-679, and Ser-681. The span at 660–677 (EQEAAKNKKSPEIHRRID) shows a compositional bias: basic and acidic residues. A disordered region spans residues 660 to 951 (EQEAAKNKKS…EKDSLQPSAE (292 aa)). Basic and acidic residues predominate over residues 688-758 (LTHEELKSPR…RSTEKTEKTH (71 aa)). A Glycyl lysine isopeptide (Lys-Gly) (interchain with G-Cter in SUMO2) cross-link involves residue Lys-694. A Phosphoserine modification is found at Ser-695. Residues Lys-702, Lys-706, Lys-708, Lys-753, and Lys-756 each participate in a glycyl lysine isopeptide (Lys-Gly) (interchain with G-Cter in SUMO2) cross-link. A compositionally biased stretch (basic residues) spans 759–772 (KGSKKQKKHRRARD). Residues 776–786 (SSSSSSQSSHS) are compositionally biased toward low complexity. At Lys-808 the chain carries N6-acetyllysine. Arg-841 carries the post-translational modification Asymmetric dimethylarginine. The span at 844-854 (YSGNNNNNSNN) shows a compositional bias: low complexity. Ser-860 carries the phosphoserine modification. Thr-870 carries the phosphothreonine modification. Glycyl lysine isopeptide (Lys-Gly) (interchain with G-Cter in SUMO2) cross-links involve residues Lys-872 and Lys-875. Residues 877–891 (YLHDDREGEGSDKWM) are compositionally biased toward basic and acidic residues. Phosphoserine occurs at positions 924 and 935. Positions 926–936 (EEGEIEDDESG) are enriched in acidic residues.

Belongs to the BCLAF1/THRAP3 family. As to quaternary structure, associated with the large multiprotein complex TRAP (Mediator complex-like). Interacts with SFPQ; the interaction is dependent on SFPQ phosphorylation at 'Thr-687' and inhibits binding of SFPQ to an ESS1 exonic splicing silencer element-containing RNA. Interacts with NXF1. Component of the SNARP complex which consists at least of SNIP1, SNW1, THRAP3, BCLAF1 and PNN. Associated with spliced mRNP complexes. Interacts with HELZ2 and PPARG. Interacts with CLOCK and BMAL1. Component of a MACOM-like complex, named WTAP complex, composed of WTAP, ZC3H13, CBLL1, KIAA1429, RBM15, BCLAF1 and THRAP3.

The protein resides in the nucleus. The protein localises to the nucleoplasm. Its subcellular location is the nucleus speckle. Involved in pre-mRNA splicing. Remains associated with spliced mRNA after splicing which probably involves interactions with the exon junction complex (EJC). Can trigger mRNA decay which seems to be independent of nonsense-mediated decay involving premature stop codons (PTC) recognition. May be involved in nuclear mRNA decay. Involved in regulation of signal-induced alternative splicing. During splicing of PTPRC/CD45 is proposed to sequester phosphorylated SFPQ from PTPRC/CD45 pre-mRNA in resting T-cells. Involved in cyclin-D1/CCND1 mRNA stability probably by acting as component of the SNARP complex which associates with both the 3'end of the CCND1 gene and its mRNA. Involved in response to DNA damage. Is excluced from DNA damage sites in a manner that parallels transcription inhibition; the function may involve the SNARP complex. Initially thought to play a role in transcriptional coactivation through its association with the TRAP complex; however, it is not regarded as a stable Mediator complex subunit. Cooperatively with HELZ2, enhances the transcriptional activation mediated by PPARG, maybe through the stabilization of the PPARG binding to DNA in presence of ligand. May play a role in the terminal stage of adipocyte differentiation. Plays a role in the positive regulation of the circadian clock. Acts as a coactivator of the CLOCK-BMAL1 heterodimer and promotes its transcriptional activator activity and binding to circadian target genes. In Mus musculus (Mouse), this protein is Thyroid hormone receptor-associated protein 3 (Thrap3).